We begin with the raw amino-acid sequence, 196 residues long: Pyridoxal 5'-phosphate synthase subunit PdxT (196 aa).

An L-glutamine-binding site is contributed by Gly-47–Ser-49. The active-site Nucleophile is the Cys-79. L-glutamine-binding positions include Arg-106 and Ile-134 to Arg-135. Residues His-170 and Glu-172 each act as charge relay system in the active site.

This sequence belongs to the glutaminase PdxT/SNO family. As to quaternary structure, in the presence of PdxS, forms a dodecamer of heterodimers. Only shows activity in the heterodimer.

It catalyses the reaction aldehydo-D-ribose 5-phosphate + D-glyceraldehyde 3-phosphate + L-glutamine = pyridoxal 5'-phosphate + L-glutamate + phosphate + 3 H2O + H(+). The catalysed reaction is L-glutamine + H2O = L-glutamate + NH4(+). It participates in cofactor biosynthesis; pyridoxal 5'-phosphate biosynthesis. Its function is as follows. Catalyzes the hydrolysis of glutamine to glutamate and ammonia as part of the biosynthesis of pyridoxal 5'-phosphate. The resulting ammonia molecule is channeled to the active site of PdxS. The protein is Pyridoxal 5'-phosphate synthase subunit PdxT of Bacillus cereus (strain Q1).